The primary structure comprises 89 residues: Small ribosomal subunit protein uS14A (89 aa).

This sequence belongs to the universal ribosomal protein uS14 family. As to quaternary structure, part of the 30S ribosomal subunit. Contacts proteins S3 and S10.

Its function is as follows. Binds 16S rRNA, required for the assembly of 30S particles and may also be responsible for determining the conformation of the 16S rRNA at the A site. This chain is Small ribosomal subunit protein uS14A, found in Staphylococcus aureus (strain Newman).